Consider the following 343-residue polypeptide: Anthranilate phosphoribosyltransferase (343 aa).

5-phospho-alpha-D-ribose 1-diphosphate-binding positions include glycine 84, glycine 87 to aspartate 88, threonine 92, asparagine 94 to threonine 97, lysine 112 to serine 120, and serine 124. Glycine 84 contacts anthranilate. Serine 96 contacts Mg(2+). Asparagine 115 is a binding site for anthranilate. Anthranilate is bound at residue arginine 170. 2 residues coordinate Mg(2+): aspartate 229 and glutamate 230.

Belongs to the anthranilate phosphoribosyltransferase family. As to quaternary structure, homodimer. It depends on Mg(2+) as a cofactor.

It catalyses the reaction N-(5-phospho-beta-D-ribosyl)anthranilate + diphosphate = 5-phospho-alpha-D-ribose 1-diphosphate + anthranilate. It functions in the pathway amino-acid biosynthesis; L-tryptophan biosynthesis; L-tryptophan from chorismate: step 2/5. Catalyzes the transfer of the phosphoribosyl group of 5-phosphorylribose-1-pyrophosphate (PRPP) to anthranilate to yield N-(5'-phosphoribosyl)-anthranilate (PRA). This is Anthranilate phosphoribosyltransferase from Burkholderia multivorans (strain ATCC 17616 / 249).